The chain runs to 291 residues: Citrate lyase subunit beta (291 aa).

2 residues coordinate substrate: R66 and E129. Mg(2+) contacts are provided by E129 and D156.

Belongs to the HpcH/HpaI aldolase family. Citrate lyase beta subunit subfamily. As to quaternary structure, oligomer with a subunit composition of (alpha,beta,gamma)6. The cofactor is Mg(2+).

It localises to the cytoplasm. It carries out the reaction citrate = oxaloacetate + acetate. It catalyses the reaction (3S)-citryl-CoA = oxaloacetate + acetyl-CoA. Represents a citryl-ACP lyase. The protein is Citrate lyase subunit beta (citE) of Haemophilus influenzae (strain ATCC 51907 / DSM 11121 / KW20 / Rd).